A 304-amino-acid polypeptide reads, in one-letter code: Homoserine kinase (304 aa).

90–100 (PLARGLGSSAS) contacts ATP.

The protein belongs to the GHMP kinase family. Homoserine kinase subfamily.

The protein resides in the cytoplasm. The catalysed reaction is L-homoserine + ATP = O-phospho-L-homoserine + ADP + H(+). It participates in amino-acid biosynthesis; L-threonine biosynthesis; L-threonine from L-aspartate: step 4/5. In terms of biological role, catalyzes the ATP-dependent phosphorylation of L-homoserine to L-homoserine phosphate. This Staphylococcus aureus (strain MSSA476) protein is Homoserine kinase.